We begin with the raw amino-acid sequence, 217 residues long: Probable transaldolase (217 aa).

Lysine 83 serves as the catalytic Schiff-base intermediate with substrate.

It belongs to the transaldolase family. Type 3B subfamily.

It localises to the cytoplasm. The enzyme catalyses D-sedoheptulose 7-phosphate + D-glyceraldehyde 3-phosphate = D-erythrose 4-phosphate + beta-D-fructose 6-phosphate. It participates in carbohydrate degradation; pentose phosphate pathway; D-glyceraldehyde 3-phosphate and beta-D-fructose 6-phosphate from D-ribose 5-phosphate and D-xylulose 5-phosphate (non-oxidative stage): step 2/3. Transaldolase is important for the balance of metabolites in the pentose-phosphate pathway. The sequence is that of Probable transaldolase from Anaeromyxobacter sp. (strain K).